The chain runs to 238 residues: Riboflavin-binding protein (238 aa).

The signal sequence occupies residues 1 to 17 (MLRFAITLFAVITSSTC). Residue Q18 is modified to Pyrrolidone carboxylic acid. Intrachain disulfides connect C22-C49, C41-C90, C50-C94, C74-C155, C81-C127, C116-C186, C120-C169, C133-C151, and C184-C219. A glycan (N-linked (GlcNAc...) asparagine) is linked at N53. N164 is a glycosylation site (N-linked (GlcNAc...) asparagine). 8 positions are modified to phosphoserine: S204, S205, S208, S209, S210, S212, S213, and S214.

Belongs to the folate receptor family. Post-translationally, plasma and yolk RBPS have the same carbohydrate components, whereas egg-white RBP has a different, ovomucoid-type carbohydrate chain. In terms of processing, plasma RBP has the same C-terminal sequence as the egg-white RBP, which suggests that the C-terminal residues are cleaved off upon incorporation into the oocyte. Yolk RBP is synthesized in the liver; egg-white RBP is synthesized in the oviduct.

Functionally, required for the transport of riboflavin to the developing oocyte. The chain is Riboflavin-binding protein from Gallus gallus (Chicken).